The chain runs to 361 residues: Myb/SANT-like DNA-binding domain-containing protein 7 (361 aa).

The Myb-like domain maps to 11–70; the sequence is RWSRQETRTLLSILGEAEYIQRLQTVHHNADVYQAVSKRMQQEGFRRTERQCRSKFKVLK. 2 disordered regions span residues 174–198 and 217–272; these read TSDL…SYSS and RLGV…ARRR. Polar residues-rich tracts occupy residues 187–198 and 226–249; these read AGCSQGTPSYSS and PCTS…SSSR.

The polypeptide is Myb/SANT-like DNA-binding domain-containing protein 7 (Homo sapiens (Human)).